A 152-amino-acid chain; its full sequence is Ribosome maturation factor RimP (152 aa).

Belongs to the RimP family.

The protein localises to the cytoplasm. Required for maturation of 30S ribosomal subunits. The protein is Ribosome maturation factor RimP of Ruminiclostridium cellulolyticum (strain ATCC 35319 / DSM 5812 / JCM 6584 / H10) (Clostridium cellulolyticum).